The primary structure comprises 695 residues: RING finger protein 145 (695 aa).

A run of 13 helical transmembrane segments spans residues 53–73, 77–97, 123–143, 146–166, 168–188, 225–245, 275–295, 316–336, 340–360, 384–404, 410–430, 460–480, and 482–502; these read YLAL…LTLP, LAKL…HQIS, FITA…VMKT, IWLF…IPIE, IVVI…YFLA, LVVP…QIYT, YSLL…LTLC, TEGV…LQVV, FLLS…MLEI, SLCL…CQFF, LLII…TLFV, LLEF…TVFG, and WTVM…WLRA. Residues 537–575 form an RING-type; atypical zinc finger; that stretch reads CSICYQDMNSAVITPCSHFFHPGCLKKWLYVQETCPLCH. A compositionally biased stretch (polar residues) spans 589–604; that stretch reads SGSSTNPVVEQSANNP. Positions 589–608 are disordered; the sequence is SGSSTNPVVEQSANNPPQEP.

It localises to the membrane. The sequence is that of RING finger protein 145 (rnf145) from Xenopus laevis (African clawed frog).